The primary structure comprises 216 residues: Probable transaldolase (216 aa).

Catalysis depends on lysine 85, which acts as the Schiff-base intermediate with substrate.

This sequence belongs to the transaldolase family. Type 3B subfamily.

The protein resides in the cytoplasm. The catalysed reaction is D-sedoheptulose 7-phosphate + D-glyceraldehyde 3-phosphate = D-erythrose 4-phosphate + beta-D-fructose 6-phosphate. It functions in the pathway carbohydrate degradation; pentose phosphate pathway; D-glyceraldehyde 3-phosphate and beta-D-fructose 6-phosphate from D-ribose 5-phosphate and D-xylulose 5-phosphate (non-oxidative stage): step 2/3. Functionally, transaldolase is important for the balance of metabolites in the pentose-phosphate pathway. This Dehalococcoides mccartyi (strain ATCC BAA-2266 / KCTC 15142 / 195) (Dehalococcoides ethenogenes (strain 195)) protein is Probable transaldolase.